The following is a 297-amino-acid chain: T-cell leukemia homeobox protein 3 (297 aa).

Residues 1–68 (MEPAAGAQGP…LGGPRGGAPY (68 aa)) are disordered. Over residues 32-52 (APPPPPPPPPPPPPPPPPPRG) the composition is skewed to pro residues. Residues 172–231 (RKKPRTSFSRVQICELEKRFHRQKYLASAERAALAKSLKMTDAQVKTWFQNRRTKWRRQT) constitute a DNA-binding region (homeobox).

Expression is restricted to neurons in the peripheral and central nervous system.

The protein localises to the nucleus. Functionally, seems to be involved in the development of cranial sensory innervation from peripheral ganglia. The sequence is that of T-cell leukemia homeobox protein 3 (TLX3) from Gallus gallus (Chicken).